A 255-amino-acid chain; its full sequence is ParA family protein CPn_0805/CP_1066/CPj0805/CpB0834 (255 aa).

This sequence belongs to the ParA family.

The sequence is that of ParA family protein CPn_0805/CP_1066/CPj0805/CpB0834 from Chlamydia pneumoniae (Chlamydophila pneumoniae).